The primary structure comprises 337 residues: PHD finger protein 11 (337 aa).

The segment at Lys-42–Leu-78 adopts a C2HC pre-PHD-type zinc-finger fold. The PHD-type zinc finger occupies Leu-108 to Ala-160.

As to quaternary structure, interacts with BRCA1 and RELA.

Its subcellular location is the nucleus. In terms of biological role, positive regulator of Th1-type cytokine gene expression. This chain is PHD finger protein 11 (PHF11), found in Bos taurus (Bovine).